Reading from the N-terminus, the 255-residue chain is Hydroxyacylglutathione hydrolase (255 aa).

7 residues coordinate Zn(2+): histidine 56, histidine 58, aspartate 60, histidine 61, histidine 114, aspartate 133, and histidine 171.

Belongs to the metallo-beta-lactamase superfamily. Glyoxalase II family. As to quaternary structure, monomer. Requires Zn(2+) as cofactor.

The catalysed reaction is an S-(2-hydroxyacyl)glutathione + H2O = a 2-hydroxy carboxylate + glutathione + H(+). It functions in the pathway secondary metabolite metabolism; methylglyoxal degradation; (R)-lactate from methylglyoxal: step 2/2. Thiolesterase that catalyzes the hydrolysis of S-D-lactoyl-glutathione to form glutathione and D-lactic acid. The polypeptide is Hydroxyacylglutathione hydrolase (Bradyrhizobium sp. (strain ORS 278)).